The chain runs to 445 residues: Protein trichome berefringence-like 7 (445 aa).

A helical; Signal-anchor for type II membrane protein transmembrane segment spans residues 69–89; sequence IIAGTIVSFLVIIAGGYLYVV. Residues 188–190 carry the GDS motif motif; it reads GDS. A DCXHWCLPGXXDXWN motif motif is present at residues 418–432; it reads DCSHWCLPGVPDIWN.

Belongs to the PC-esterase family. TBL subfamily.

It is found in the membrane. In terms of biological role, may act as a bridging protein that binds pectin and other cell wall polysaccharides. Probably involved in maintaining esterification of pectins. May be involved in the specific O-acetylation of cell wall polymers. In Arabidopsis thaliana (Mouse-ear cress), this protein is Protein trichome berefringence-like 7 (TBL7).